The following is a 316-amino-acid chain: Nucleotide-binding protein Sala_2050 (316 aa).

18 to 25 (GLSGAGKS) is an ATP binding site. Residue 69–72 (DSRS) coordinates GTP. Positions 283 to 316 (GYEPTLTHRNLDSAPQDGLEGKPPSAARASGGAR) are disordered.

It belongs to the RapZ-like family.

Functionally, displays ATPase and GTPase activities. The protein is Nucleotide-binding protein Sala_2050 of Sphingopyxis alaskensis (strain DSM 13593 / LMG 18877 / RB2256) (Sphingomonas alaskensis).